The chain runs to 264 residues: Phycocyanobilin:ferredoxin oxidoreductase (264 aa).

It belongs to the HY2 family.

The enzyme catalyses (2R,3Z)-phycocyanobilin + 4 oxidized [2Fe-2S]-[ferredoxin] = biliverdin IXalpha + 4 reduced [2Fe-2S]-[ferredoxin] + 4 H(+). Functionally, catalyzes the four-electron reduction of biliverdin IX-alpha (2-electron reduction at both the A and D rings); the reaction proceeds via an isolatable 2-electron intermediate, 181,182-dihydrobiliverdin. The protein is Phycocyanobilin:ferredoxin oxidoreductase (pcyA) of Prochlorococcus marinus (strain MIT 9313).